A 379-amino-acid polypeptide reads, in one-letter code: Lipoyl synthase, mitochondrial (379 aa).

Cys-106, Cys-111, Cys-117, Cys-137, Cys-141, Cys-144, and Ser-352 together coordinate [4Fe-4S] cluster. Residues 122–341 (EHGTQTATIM…EERGNALGFL (220 aa)) enclose the Radical SAM core domain.

This sequence belongs to the radical SAM superfamily. Lipoyl synthase family. The cofactor is [4Fe-4S] cluster.

Its subcellular location is the mitochondrion. It catalyses the reaction [[Fe-S] cluster scaffold protein carrying a second [4Fe-4S](2+) cluster] + N(6)-octanoyl-L-lysyl-[protein] + 2 oxidized [2Fe-2S]-[ferredoxin] + 2 S-adenosyl-L-methionine + 4 H(+) = [[Fe-S] cluster scaffold protein] + N(6)-[(R)-dihydrolipoyl]-L-lysyl-[protein] + 4 Fe(3+) + 2 hydrogen sulfide + 2 5'-deoxyadenosine + 2 L-methionine + 2 reduced [2Fe-2S]-[ferredoxin]. Its pathway is protein modification; protein lipoylation via endogenous pathway; protein N(6)-(lipoyl)lysine from octanoyl-[acyl-carrier-protein]: step 2/2. Catalyzes the radical-mediated insertion of two sulfur atoms into the C-6 and C-8 positions of the octanoyl moiety bound to the lipoyl domains of lipoate-dependent enzymes, thereby converting the octanoylated domains into lipoylated derivatives. The protein is Lipoyl synthase, mitochondrial of Drosophila erecta (Fruit fly).